The sequence spans 194 residues: Large ribosomal subunit protein bL9 (194 aa).

The segment at 169–194 (DDINDNARPENFFDPNAEFDGGEDNA) is disordered.

It belongs to the bacterial ribosomal protein bL9 family.

Functionally, binds to the 23S rRNA. The chain is Large ribosomal subunit protein bL9 from Mesorhizobium japonicum (strain LMG 29417 / CECT 9101 / MAFF 303099) (Mesorhizobium loti (strain MAFF 303099)).